Consider the following 313-residue polypeptide: tRNA uridine(34) hydroxylase (313 aa).

Residues 124–218 (SDPEVLLIDT…YLEEVPQEET (95 aa)) form the Rhodanese domain. Residue C178 is the Cysteine persulfide intermediate of the active site.

This sequence belongs to the TrhO family.

The catalysed reaction is uridine(34) in tRNA + AH2 + O2 = 5-hydroxyuridine(34) in tRNA + A + H2O. Its function is as follows. Catalyzes oxygen-dependent 5-hydroxyuridine (ho5U) modification at position 34 in tRNAs. The polypeptide is tRNA uridine(34) hydroxylase (Pseudomonas fluorescens (strain Pf0-1)).